Reading from the N-terminus, the 476-residue chain is MSRFSGALQLTDLDDFITPSQECIKPVMIDKTKSKTGAKITVQADGYYEQSESGKQKLQKVEITLQDCLACSGCITSAEGVLITQQSQEELLKVLRENQTLKASGDNDQVRTIVFTISVQPLLSLAHRYDLGVEEASRYLAGYLRQLGADYVLCTKIADDLALLECRQEFVERFRDNAELSMLSSSCPGWVCYAEKTHGNFILPHIATTRSPQQIMGVLVKQLLAEKLGVPGSRIYHATIMPCYDKKLEASREDFYSEVNGSRDVDCVITSIEVEQMLQAEEQTLQQFEPSDIDWPWTDQQPEFPVWAHEATMSGGYAEHIFKYAAKELFSEETPNELQFKALRNRDFSEISLEKDGKTVLKFAIANGFRNIQNLVQKLKRGKGPGYHFVEVMACPSGCINGGAQVRPTTGQHVRELTQQLEELYKQLPRSNPDNSYTKQIYTDFLDGAHTDKSLELLHTSYHAVEKLNTALNIKW.

Positions 23, 68, 71, 74, 187, 243, 395, and 399 each coordinate [4Fe-4S] cluster.

It belongs to the NARF family.

Component of the cytosolic iron-sulfur (Fe/S) protein assembly machinery. Required for maturation of extramitochondrial Fe/S proteins. The protein is Probable cytosolic Fe-S cluster assembly factor GJ13047 of Drosophila virilis (Fruit fly).